We begin with the raw amino-acid sequence, 427 residues long: Serine--tRNA ligase (427 aa).

231-233 (TAE) serves as a coordination point for L-serine. 262–264 (RSE) lines the ATP pocket. Residue E285 participates in L-serine binding. 349-352 (EISS) is a binding site for ATP. Position 385 (S385) interacts with L-serine.

The protein belongs to the class-II aminoacyl-tRNA synthetase family. Type-1 seryl-tRNA synthetase subfamily. Homodimer. The tRNA molecule binds across the dimer.

Its subcellular location is the cytoplasm. It carries out the reaction tRNA(Ser) + L-serine + ATP = L-seryl-tRNA(Ser) + AMP + diphosphate + H(+). The enzyme catalyses tRNA(Sec) + L-serine + ATP = L-seryl-tRNA(Sec) + AMP + diphosphate + H(+). Its pathway is aminoacyl-tRNA biosynthesis; selenocysteinyl-tRNA(Sec) biosynthesis; L-seryl-tRNA(Sec) from L-serine and tRNA(Sec): step 1/1. Its function is as follows. Catalyzes the attachment of serine to tRNA(Ser). Is also able to aminoacylate tRNA(Sec) with serine, to form the misacylated tRNA L-seryl-tRNA(Sec), which will be further converted into selenocysteinyl-tRNA(Sec). In Listeria welshimeri serovar 6b (strain ATCC 35897 / DSM 20650 / CCUG 15529 / CIP 8149 / NCTC 11857 / SLCC 5334 / V8), this protein is Serine--tRNA ligase.